Here is a 239-residue protein sequence, read N- to C-terminus: ATP-dependent dethiobiotin synthetase BioD (239 aa).

15–20 (EIGKTF) lines the ATP pocket. Thr19 lines the Mg(2+) pocket. The active site involves Lys40. Residues Asp57, 118 to 121 (EGAG), and 178 to 179 (NH) contribute to the ATP site. Asp57 and Glu118 together coordinate Mg(2+).

Belongs to the dethiobiotin synthetase family. Homodimer. The cofactor is Mg(2+).

The protein localises to the cytoplasm. The enzyme catalyses (7R,8S)-7,8-diammoniononanoate + CO2 + ATP = (4R,5S)-dethiobiotin + ADP + phosphate + 3 H(+). It participates in cofactor biosynthesis; biotin biosynthesis; biotin from 7,8-diaminononanoate: step 1/2. Its function is as follows. Catalyzes a mechanistically unusual reaction, the ATP-dependent insertion of CO2 between the N7 and N8 nitrogen atoms of 7,8-diaminopelargonic acid (DAPA, also called 7,8-diammoniononanoate) to form a ureido ring. The chain is ATP-dependent dethiobiotin synthetase BioD from Burkholderia lata (strain ATCC 17760 / DSM 23089 / LMG 22485 / NCIMB 9086 / R18194 / 383).